Consider the following 393-residue polypeptide: MGRLTSGVGTAALLVVAVGLRVVCAKYALADPSLKMADPNRFRGKNLPVLDRLTDPPGVKRVYHIQPSLEDPFQPPSIPITVYYAVLERACRSVLLHAPSEAPQIVRGASDEARKHTYNLTIAWYRMGDNCAIPITVMEYTECPYNKSLGVCPIRTQPRWSYYDSFSAVSEDNLGFLMHAPAFETAGTYLRLVKINDWTEITQFILEHRARASCKYALPLRIPPAACLTSKAYQQGVTVDSIGMLPRFIPENQRTVALYSLKIAGWHGPKPPYTSTLLPPELSDTTNATQPELVPEDPEDSALLEDPAGTVSSQIPPNWHIPSIQDVAPHHAPAAPSNPGLIIGALAGSTLAVLVIGGIAFWVRRRAQMAPKRLRLPHIRDDDAPPSHQPLFY.

Residues 1–25 (MGRLTSGVGTAALLVVAVGLRVVCA) form the signal peptide. The tract at residues 25-57 (AKYALADPSLKMADPNRFRGKNLPVLDRLTDPP) is interaction with TNFRSF14. Over 26 to 339 (KYALADPSLK…HHAPAAPSNP (314 aa)) the chain is Virion surface. Residue His-64 participates in Zn(2+) binding. 3 cysteine pairs are disulfide-bonded: Cys-91/Cys-214, Cys-131/Cys-227, and Cys-143/Cys-152. 2 N-linked (GlcNAc...) asparagine; by host glycosylation sites follow: Asn-119 and Asn-146. Asp-240 lines the Zn(2+) pocket. A profusion region spans residues 261–305 (LKIAGWHGPKPPYTSTLLPPELSDTTNATQPELVPEDPEDSALLE). Positions 274–290 (TSTLLPPELSDTTNATQ) are enriched in polar residues. A disordered region spans residues 274–301 (TSTLLPPELSDTTNATQPELVPEDPEDS). A glycan (N-linked (GlcNAc...) asparagine; by host) is linked at Asn-287. Residues 340–363 (GLIIGALAGSTLAVLVIGGIAFWV) traverse the membrane as a helical segment. The Intravirion segment spans residues 364 to 393 (RRRAQMAPKRLRLPHIRDDDAPPSHQPLFY).

It belongs to the herpesviridae glycoprotein D family. In terms of assembly, homodimer. Interacts with host receptor TNFRSF14. Interacts with host receptor NECTIN1. Interacts with host receptor NECTIN2. Interacts (via profusion domain) with gB; this interaction occurs in the absence of gH/gL. Interacts (via profusion domain) with gH/gL heterodimer; this interaction occurs in the absence of gB. Associates with the gB-gH/gL-gD complex. Interacts (via C-terminus) with UL11 tegument protein.

The protein resides in the virion membrane. Envelope glycoprotein that binds to the host cell entry receptors NECTIN1, NECTIN2 and TNFRSF14/HVEM, promoting the virus entry into host cells. May trigger fusion with host membrane, by recruiting the fusion machinery composed of gB and gH/gL. In Homo sapiens (Human), this protein is Envelope glycoprotein D (gD).